A 485-amino-acid polypeptide reads, in one-letter code: Envelope glycoprotein C (485 aa).

Positions 1–32 are cleaved as a signal peptide; that stretch reads MGLVNIMRFITFAYIICGGFILTRTSGTSASA. Residues 28–72 show a composition bias toward low complexity; sequence TSASASPATPTTNTGEGTSSPVTPTYTTSTDSNNSTATNNSTDVN. Positions 28–88 are disordered; the sequence is TSASASPATP…TPSHPHSHEN (61 aa). Over 33–444 the chain is Virion surface; sequence SPATPTTNTG…DASPIVEDMP (412 aa). 11 N-linked (GlcNAc...) asparagine; by host glycosylation sites follow: Asn-60, Asn-61, Asn-66, Asn-67, Asn-72, Asn-108, Asn-116, Asn-147, Asn-220, Asn-225, and Asn-286. Cys-92 and Cys-109 are oxidised to a cystine. The Ig-like domain maps to 237–330; sequence PLMDLSVHPS…EWYRDEVSFS (94 aa). Cystine bridges form between Cys-256-Cys-318, Cys-357-Cys-416, and Cys-361-Cys-390. Residues 445–468 form a helical membrane-spanning segment; it reads VLTGIIAVTCGAAALALVVLITAV. Residues 469 to 485 lie on the Cytoplasmic side of the membrane; that stretch reads CFYCSKPSQVPYKKADF.

It belongs to the herpesviridae glycoprotein C family. As to quaternary structure, interacts with host complement component C3; this interaction inhibits host immune response by disregulating complement cascade.

It is found in the virion membrane. Essential for the initial attachment to heparan sulfate moieties of the host cell surface proteoglycans. Also plays a role in host immune evasion by inhibiting the host complement cascade activation. The protein is Envelope glycoprotein C (gC) of Equine herpesvirus 4 (strain 1942) (EHV-4).